The sequence spans 313 residues: Pyrimidine-specific ribonucleoside hydrolase RihB (313 aa).

The active-site Proton acceptor is the D11. Positions 11, 16, and 124 each coordinate Ca(2+). Positions 227 and 239 each coordinate substrate. D240 is a binding site for Ca(2+).

It belongs to the IUNH family. RihB subfamily. Homotetramer. Requires Ca(2+) as cofactor.

It catalyses the reaction a pyrimidine ribonucleoside + H2O = a pyrimidine nucleobase + D-ribose. Functionally, hydrolyzes cytidine or uridine to ribose and cytosine or uracil, respectively. Has a clear preference for cytidine over uridine. Strictly specific for ribonucleosides. This is Pyrimidine-specific ribonucleoside hydrolase RihB from Escherichia coli O9:H4 (strain HS).